Consider the following 112-residue polypeptide: MDINQNLGNLMKEAQKMQQRMQEAQQQLSQLVVSGESGGGMVTIKMNGRHDVTEVKIKPTLMDEDIEMLEDLIAAAVNDAVRKIEKASKEKISQLTAGLNIPTDLMGDKEGE.

It belongs to the YbaB/EbfC family. Homodimer.

The protein resides in the cytoplasm. It localises to the nucleoid. Functionally, binds to DNA and alters its conformation. May be involved in regulation of gene expression, nucleoid organization and DNA protection. The protein is Nucleoid-associated protein lpg2755 of Legionella pneumophila subsp. pneumophila (strain Philadelphia 1 / ATCC 33152 / DSM 7513).